Reading from the N-terminus, the 427-residue chain is Glutamate-1-semialdehyde 2,1-aminomutase (427 aa).

Lys-265 is modified (N6-(pyridoxal phosphate)lysine).

This sequence belongs to the class-III pyridoxal-phosphate-dependent aminotransferase family. HemL subfamily. Homodimer. It depends on pyridoxal 5'-phosphate as a cofactor.

Its subcellular location is the cytoplasm. The enzyme catalyses (S)-4-amino-5-oxopentanoate = 5-aminolevulinate. The protein operates within porphyrin-containing compound metabolism; protoporphyrin-IX biosynthesis; 5-aminolevulinate from L-glutamyl-tRNA(Glu): step 2/2. The sequence is that of Glutamate-1-semialdehyde 2,1-aminomutase from Burkholderia lata (strain ATCC 17760 / DSM 23089 / LMG 22485 / NCIMB 9086 / R18194 / 383).